A 65-amino-acid polypeptide reads, in one-letter code: Large ribosomal subunit protein uL29 (65 aa).

This sequence belongs to the universal ribosomal protein uL29 family.

In Xylella fastidiosa (strain Temecula1 / ATCC 700964), this protein is Large ribosomal subunit protein uL29.